A 271-amino-acid chain; its full sequence is Ribosomal RNA small subunit methyltransferase A (271 aa).

Residues H11, L13, G38, E59, D84, and N109 each coordinate S-adenosyl-L-methionine.

This sequence belongs to the class I-like SAM-binding methyltransferase superfamily. rRNA adenine N(6)-methyltransferase family. RsmA subfamily.

It is found in the cytoplasm. The catalysed reaction is adenosine(1518)/adenosine(1519) in 16S rRNA + 4 S-adenosyl-L-methionine = N(6)-dimethyladenosine(1518)/N(6)-dimethyladenosine(1519) in 16S rRNA + 4 S-adenosyl-L-homocysteine + 4 H(+). Its function is as follows. Specifically dimethylates two adjacent adenosines (A1518 and A1519) in the loop of a conserved hairpin near the 3'-end of 16S rRNA in the 30S particle. May play a critical role in biogenesis of 30S subunits. This is Ribosomal RNA small subunit methyltransferase A from Nostoc sp. (strain PCC 7120 / SAG 25.82 / UTEX 2576).